A 334-amino-acid chain; its full sequence is Beta-hexosaminidase (334 aa).

Substrate contacts are provided by residues aspartate 60, arginine 68, arginine 133, and 163 to 164 (KH). Residue histidine 176 is the Proton donor/acceptor of the active site. Catalysis depends on aspartate 247, which acts as the Nucleophile.

This sequence belongs to the glycosyl hydrolase 3 family. NagZ subfamily.

The protein localises to the cytoplasm. It catalyses the reaction Hydrolysis of terminal non-reducing N-acetyl-D-hexosamine residues in N-acetyl-beta-D-hexosaminides.. The protein operates within cell wall biogenesis; peptidoglycan recycling. Its function is as follows. Plays a role in peptidoglycan recycling by cleaving the terminal beta-1,4-linked N-acetylglucosamine (GlcNAc) from peptide-linked peptidoglycan fragments, giving rise to free GlcNAc, anhydro-N-acetylmuramic acid and anhydro-N-acetylmuramic acid-linked peptides. The chain is Beta-hexosaminidase from Xanthomonas oryzae pv. oryzae (strain KACC10331 / KXO85).